The primary structure comprises 413 residues: MIYGEVTLTIIDNDKKVKIRKKNTIVNLSALLPLITSTTSTAGSIITPYIQTNAGNIPVTYSVQPYESGYVFIFTGSFSQPSNIISAFLYPSSLSTFQQPIASIVYSREITGVTSIEWAIYVDDATGLLYNALLPNIITSTNFLSALYADDGNTNALLTLGAYQHYVYAYFSDATISKAINYINAHYFTFIDYTTSPSAITIGNNFALQLVPASTGQHTVFYYLWNSQNFTMQFSFSSGSSPLADGFVVCMYATTPPIALNTSSVTGMTNGTLAYGEGNQICVEFDPYSSQPISVTQWNGSGYVSTLLSSSGAGTGTSMTANDIFVLEITVSGTTMTVTVTDVTANKTIASQSVTLPFTPPSYGYAIITARNENDYANWSLVNIVDWYPYSIQIPTSYVSPQLLPITAIFNTD.

The chain crosses the membrane as a helical span at residues 25 to 47 (IVNLSALLPLITSTTSTAGSIIT).

The protein localises to the host membrane. This is an uncharacterized protein from Acidianus sp. F28 (AFV-2).